Consider the following 494-residue polypeptide: UPF0371 protein SpyM3_1021 (494 aa).

This sequence belongs to the UPF0371 family.

The chain is UPF0371 protein SpyM3_1021 from Streptococcus pyogenes serotype M3 (strain ATCC BAA-595 / MGAS315).